We begin with the raw amino-acid sequence, 434 residues long: SPARC-related modular calcium-binding protein 1 (434 aa).

Residues 1–26 form the signal peptide; the sequence is MLPARCARLLTPHLLLVLVQLSPARG. One can recognise a Kazal-like domain in the interval 37 to 89; it reads SDRDPQCNLHCSRTQPKPICASDGRSYESMCEYQRAKCRDPTLGVVHRGRCKD. Intrachain disulfides connect Cys-43–Cys-74, Cys-47–Cys-67, Cys-56–Cys-87, Cys-95–Cys-118, Cys-129–Cys-136, and Cys-138–Cys-158. A Thyroglobulin type-1 1 domain is found at 92-158; it reads QSKCRLERAQ…SSVQNKTPVC (67 aa). Polar residues predominate over residues 149 to 172; the sequence is SSVQNKTPVCSGSVTDKPLSQGNS. Positions 149–191 are disordered; sequence SSVQNKTPVCSGSVTDKPLSQGNSGRKDDGSKPTPTMETQPVF. N-linked (GlcNAc...) asparagine glycosylation is present at Asn-214. One can recognise a Thyroglobulin type-1 2 domain in the interval 224 to 292; that stretch reads VYSCDQERQS…TSTRYVMPSC (69 aa). 3 disulfide bridges follow: Cys-227–Cys-251, Cys-262–Cys-269, and Cys-271–Cys-292. EF-hand domains follow at residues 359–394 and 396–431; these read LEER…VKKK and KPKK…SKEG. Positions 372, 374, 376, 378, 383, 409, 411, 413, and 420 each coordinate Ca(2+). An N-linked (GlcNAc...) asparagine glycan is attached at Asn-374.

In terms of processing, glycosylated. Widely expressed in many tissues with a strongest signal in ovary. No expression in spleen.

Its subcellular location is the secreted. The protein localises to the extracellular space. It is found in the extracellular matrix. It localises to the basement membrane. In terms of biological role, plays essential roles in both eye and limb development. Probable regulator of osteoblast differentiation. The polypeptide is SPARC-related modular calcium-binding protein 1 (SMOC1) (Homo sapiens (Human)).